The following is a 273-amino-acid chain: Mitochondrial distribution and morphology protein 12 (273 aa).

One can recognise an SMP-LTD domain in the interval 1–260 (MSFDINWEQL…WPSWINFDFY (260 aa)). Residues 76-98 (MSAEEETEGSDDEGYGGDRVRNR) form a disordered region. Acidic residues predominate over residues 78–90 (AEEETEGSDDEGY).

It belongs to the MDM12 family. Component of the ER-mitochondria encounter structure (ERMES) or MDM complex, composed of MMM1, MDM10, MDM12 and MDM34. An MMM1 homodimer associates with one molecule of MDM12 on each side in a pairwise head-to-tail manner, and the SMP-LTD domains of MMM1 and MDM12 generate a continuous hydrophobic tunnel for phospholipid trafficking.

It localises to the mitochondrion outer membrane. The protein resides in the endoplasmic reticulum membrane. In terms of biological role, component of the ERMES/MDM complex, which serves as a molecular tether to connect the endoplasmic reticulum (ER) and mitochondria. Components of this complex are involved in the control of mitochondrial shape and protein biogenesis, and function in nonvesicular lipid trafficking between the ER and mitochondria. MDM12 is required for the interaction of the ER-resident membrane protein MMM1 and the outer mitochondrial membrane-resident beta-barrel protein MDM10. The MDM12-MMM1 subcomplex functions in the major beta-barrel assembly pathway that is responsible for biogenesis of all mitochondrial outer membrane beta-barrel proteins, and acts in a late step after the SAM complex. The MDM10-MDM12-MMM1 subcomplex further acts in the TOM40-specific pathway after the action of the MDM12-MMM1 complex. Essential for establishing and maintaining the structure of mitochondria and maintenance of mtDNA nucleoids. This Vanderwaltozyma polyspora (strain ATCC 22028 / DSM 70294 / BCRC 21397 / CBS 2163 / NBRC 10782 / NRRL Y-8283 / UCD 57-17) (Kluyveromyces polysporus) protein is Mitochondrial distribution and morphology protein 12.